The primary structure comprises 423 residues: Histidine--tRNA ligase (423 aa).

This sequence belongs to the class-II aminoacyl-tRNA synthetase family. As to quaternary structure, homodimer.

It is found in the cytoplasm. It catalyses the reaction tRNA(His) + L-histidine + ATP = L-histidyl-tRNA(His) + AMP + diphosphate + H(+). This Desulfosudis oleivorans (strain DSM 6200 / JCM 39069 / Hxd3) (Desulfococcus oleovorans) protein is Histidine--tRNA ligase.